We begin with the raw amino-acid sequence, 414 residues long: S-adenosylmethionine synthase (414 aa).

Histidine 11 provides a ligand contact to ATP. Aspartate 13 is a binding site for Mg(2+). Glutamate 39 is a binding site for K(+). Residues glutamate 52 and glutamine 95 each contribute to the L-methionine site. Residues 95–105 are flexible loop; that stretch reads QSPDIAQGVNM. ATP is bound by residues 169–171, 245–246, aspartate 254, 260–261, alanine 277, and lysine 281; these read DGK, KF, and RK. Position 254 (aspartate 254) interacts with L-methionine. Lysine 285 serves as a coordination point for L-methionine.

Belongs to the AdoMet synthase family. Homotetramer; dimer of dimers. Mg(2+) is required as a cofactor. Requires K(+) as cofactor.

It is found in the cytoplasm. It catalyses the reaction L-methionine + ATP + H2O = S-adenosyl-L-methionine + phosphate + diphosphate. The protein operates within amino-acid biosynthesis; S-adenosyl-L-methionine biosynthesis; S-adenosyl-L-methionine from L-methionine: step 1/1. Functionally, catalyzes the formation of S-adenosylmethionine (AdoMet) from methionine and ATP. The overall synthetic reaction is composed of two sequential steps, AdoMet formation and the subsequent tripolyphosphate hydrolysis which occurs prior to release of AdoMet from the enzyme. The chain is S-adenosylmethionine synthase from Synechococcus sp. (strain JA-2-3B'a(2-13)) (Cyanobacteria bacterium Yellowstone B-Prime).